The chain runs to 225 residues: UPF0700 transmembrane protein YoaK (225 aa).

Transmembrane regions (helical) follow at residues 10 to 30 (LLSLLCLTAGIVDVIGYLSLG), 56 to 76 (VFNSLTALIGFICGVIIATLM), 99 to 119 (ILFVFACLSFYRAFVPVHILI), 137 to 157 (GIAGISSTVLTGTLASLLEDI), 174 to 194 (TVLRALAIILYCVGAIIVALA), and 197 to 217 (DFYHFIIWVPIVLIFGIMMTA).

The protein belongs to the UPF0700 family.

It localises to the cell membrane. The polypeptide is UPF0700 transmembrane protein YoaK (yoaK) (Bacillus subtilis (strain 168)).